Reading from the N-terminus, the 414-residue chain is Esterase FrsA (414 aa).

The protein belongs to the FrsA family.

It catalyses the reaction a carboxylic ester + H2O = an alcohol + a carboxylate + H(+). Catalyzes the hydrolysis of esters. The sequence is that of Esterase FrsA from Shigella flexneri serotype 5b (strain 8401).